An 876-amino-acid chain; its full sequence is AP-5 complex subunit beta-1 (876 aa).

Probably part of the adaptor protein complex 5 (AP-5), a tetramer composed of AP5B1, AP5M1, AP5S1 and AP5Z1. Interacts with ZFYVE26 and SPG11.

Functionally, as part of AP-5, a probable fifth adaptor protein complex, it may be involved in endosomal transport. This chain is AP-5 complex subunit beta-1 (Ap5b1), found in Rattus norvegicus (Rat).